Consider the following 385-residue polypeptide: Chaperone protein DnaJ (385 aa).

Residues 5 to 70 (DYYEVLGVSK…ERKAAYDRYG (66 aa)) enclose the J domain. The segment at 143-221 (GLHKTINVPT…CNGHGRVEKD (79 aa)) adopts a CR-type zinc-finger fold. Zn(2+)-binding residues include Cys-156, Cys-159, Cys-173, Cys-176, Cys-195, Cys-198, Cys-209, and Cys-212. 4 CXXCXGXG motif repeats span residues 156 to 163 (CTSCEGTG), 173 to 180 (CPTCSGMG), 195 to 202 (CPTCSGLG), and 209 to 216 (CKTCNGHG).

It belongs to the DnaJ family. In terms of assembly, homodimer. Requires Zn(2+) as cofactor.

The protein resides in the cytoplasm. Participates actively in the response to hyperosmotic and heat shock by preventing the aggregation of stress-denatured proteins and by disaggregating proteins, also in an autonomous, DnaK-independent fashion. Unfolded proteins bind initially to DnaJ; upon interaction with the DnaJ-bound protein, DnaK hydrolyzes its bound ATP, resulting in the formation of a stable complex. GrpE releases ADP from DnaK; ATP binding to DnaK triggers the release of the substrate protein, thus completing the reaction cycle. Several rounds of ATP-dependent interactions between DnaJ, DnaK and GrpE are required for fully efficient folding. Also involved, together with DnaK and GrpE, in the DNA replication of plasmids through activation of initiation proteins. The sequence is that of Chaperone protein DnaJ from Ruegeria sp. (strain TM1040) (Silicibacter sp.).